A 114-amino-acid polypeptide reads, in one-letter code: MNLILLLVIGFLVFIGTYMILSINLIRIVIGISIYTHAGNLIIMSMGTYGSSRSEPLITGGNQLFVDPLLQAIVLTAIVIGFGMTAFLLVLVYRTYKVTKEDEIEGLRGEDDAK.

3 helical membrane-spanning segments follow: residues 3 to 23 (LILLLVIGFLVFIGTYMILSI), 28 to 48 (IVIGISIYTHAGNLIIMSMGT), and 72 to 92 (AIVLTAIVIGFGMTAFLLVLV).

The protein belongs to the CPA3 antiporters (TC 2.A.63) subunit C family. As to quaternary structure, may form a heterooligomeric complex that consists of seven subunits: mnhA2, mnhB2, mnhC2, mnhD2, mnhE2, mnhF2 and mnhG2.

Its subcellular location is the cell membrane. This Staphylococcus aureus (strain Mu3 / ATCC 700698) protein is Putative antiporter subunit mnhC2 (mnhC2).